A 484-amino-acid chain; its full sequence is Tubulin-like protein TubZ (484 aa).

A GTP-binding site is contributed by 32–33 (QK). Asp-64 is a binding site for Mg(2+). GTP is bound by residues 140 to 142 (GVG), Asn-213, Lys-237, and Asn-241. Residues 408–484 (RKQDEEKVDI…LKTSNPFKKR (77 aa)) are required to bind TubR-DNA complex. The tract at residues 428–484 (TFNPYNKNQGFGGASRFSGGKNSAFKRQTSEATSTQNQQEEENIISTLKTSNPFKKR) is disordered. A compositionally biased stretch (polar residues) spans 452 to 484 (FKRQTSEATSTQNQQEEENIISTLKTSNPFKKR).

It belongs to the FtsZ family. TubZ subfamily. Forms filaments; a 2-stranded filament forms with the non-hydrolyzable GTP-gamma-S which is probably a precursor to the 4-stranded filament that forms in the presence of GTP. The 4-stranded form binds GDP. In vivo polymerizes to form dynamic filaments that often extend from one cell pole to the other, moving in a unidirectional manner. Filaments polymerize at the plus end and depolymerize at the minus end, a process called treadmilling. Polymerization only occurs above a critical concentration, it does not require upstream tubR. The tubC DNA-TubR complex binds to TubZ. Mg(2+) is required as a cofactor.

The protein resides in the cytoplasm. The enzyme catalyses GTP + H2O = GDP + phosphate + H(+). With respect to regulation, GTPase is inhibited by GTP-gamma-S, which also stabilizes filaments. A tubulin-like, filament forming GTPase; the motor component of the type III plasmid partition system which ensures correct segregation of the pBtoxis plasmid. Filaments may seed from the centromere-like site (tubC) when bound by DNA-binding protein TubR; the tubC-TubR complex stabilizes the TubZ filament. Filaments grow at the plus end and depolymerize at the minus end, a process called treadmilling. TubR-tubC complexes track the depolymerizing minus end of the filament, probably pulling plasmid within the cell. Required for pBtoxis plasmid replication/partition. Binds the TubR-tubC complex; GTP is not required for binding to TubR-tubC. TubZ alone does not bind DNA. Has a high GTPase activity in the presence of Mg(2+); in the presence of GTP assembles into dynamic filaments which upon polymerization bind almost exclusively GDP. Filament formation is cooperative, requiring a critical concentration. Formation occurs very quickly and is followed by disassembly as GTP is consumed. The polypeptide is Tubulin-like protein TubZ (Bacillus thuringiensis subsp. israelensis).